A 130-amino-acid chain; its full sequence is UPF0251 protein Swol_2090 (130 aa).

It belongs to the UPF0251 family.

The polypeptide is UPF0251 protein Swol_2090 (Syntrophomonas wolfei subsp. wolfei (strain DSM 2245B / Goettingen)).